Reading from the N-terminus, the 100-residue chain is Urease subunit gamma (100 aa).

The protein belongs to the urease gamma subunit family. As to quaternary structure, heterotrimer of UreA (gamma), UreB (beta) and UreC (alpha) subunits. Three heterotrimers associate to form the active enzyme.

The protein resides in the cytoplasm. It catalyses the reaction urea + 2 H2O + H(+) = hydrogencarbonate + 2 NH4(+). The protein operates within nitrogen metabolism; urea degradation; CO(2) and NH(3) from urea (urease route): step 1/1. The chain is Urease subunit gamma from Opitutus terrae (strain DSM 11246 / JCM 15787 / PB90-1).